A 543-amino-acid polypeptide reads, in one-letter code: Cytochrome P450 monooxygenase sphH (543 aa).

2 helical membrane-spanning segments follow: residues 1–21 and 32–52; these read MGPI…SVYF and IATF…YQLF. Residue C487 coordinates heme.

It belongs to the cytochrome P450 family. Heme serves as cofactor.

The protein resides in the membrane. It carries out the reaction presphingofungin + 2 reduced [NADPH--hemoprotein reductase] + O2 = sphingofungin B1 + 2 oxidized [NADPH--hemoprotein reductase] + H2O + 2 H(+). The protein operates within secondary metabolite biosynthesis. Functionally, cytochrome P450 monooxygenase; part of the gene cluster that mediates the biosynthesis of sphingofungins, bioactive molecules acting as sphingolipid inhibitors via inhibiting serine palmitoyl transferase (SPT). Within the pathway, sphH catalyzes the conversion of presphingofungin into sphingofungin B1 via hydroxylagtion at position C-14. Sphingofungin biosynthesis starts with the PKS sphB that produces an C18 polyketide precursor 3-hydroxyoctadeca-4,10-dienoyl-ACP containing one delta-6 desaturation and one delta-12 desaturation. The aminoacyl transferase sphA uses the sphB product to produce 3-keto-presphingofungin by adding an aminomalonate molecule. SphF then reduces the C-3 ketone of 3-keto-presphingofungin which leads to presphingofungin. The cytochrome P450 monooxygenase sphH converts presphingofungin into sphingofungin B1 which is further converted to sphingofungin B by the dioxygenase sphC. SphC is also able to convert presphingofungin into sphingofungin B2. The acetyltransferase sphE acetylates sphingofungin B to produce sphingofungin C, but can also convert sphingofungin B1 into sphingofungin C1 and sphingofungin B2 into sphingofungin C2. Finally, sphingofungin C can be spontaneously converted into sphingofungin D. The polypeptide is Cytochrome P450 monooxygenase sphH (Aspergillus fumigatus (strain CBS 144.89 / FGSC A1163 / CEA10) (Neosartorya fumigata)).